Reading from the N-terminus, the 475-residue chain is Cytosolic non-specific dipeptidase (475 aa).

S58 bears the Phosphoserine mark. Position 99 (H99) interacts with Mn(2+). Residue D101 is part of the active site. D132 serves as a coordination point for Mn(2+). Residue E166 is the Proton acceptor of the active site. Residues 166 to 167 (EE), D195, and H228 contribute to the substrate site. Positions 167 and 195 each coordinate Mn(2+). A Phosphoserine modification is found at S299. T330, R343, S417, and H445 together coordinate substrate. H445 serves as a coordination point for Mn(2+).

Belongs to the peptidase M20A family. Homodimer. It depends on Mn(2+) as a cofactor. In terms of tissue distribution, highly expressed in the parafascicular nucleus of the thalamus, tuberomammillary nucleus of the hypothalamus and the mitral cell layer of the olfactory bulb.

Its subcellular location is the cytoplasm. It carries out the reaction Hydrolysis of dipeptides, preferentially hydrophobic dipeptides including prolyl amino acids.. It catalyses the reaction L-threonyl-L-threonine + H2O = 2 L-threonine. The catalysed reaction is L-threonyl-L-serine + H2O = L-threonine + L-serine. The enzyme catalyses L-seryl-L-threonine + H2O = L-threonine + L-serine. It carries out the reaction L-cysteinylglycine + H2O = L-cysteine + glycine. It catalyses the reaction L-alanyl-L-cysteine + H2O = L-cysteine + L-alanine. The catalysed reaction is (S)-lactate + L-phenylalanine = N-[(S)-lactoyl]-L-phenylalanine + H2O. With respect to regulation, inhibited by bestatin. In terms of biological role, catalyzes the peptide bond hydrolysis in dipeptides, displaying a non-redundant activity toward threonyl dipeptides. Mediates threonyl dipeptide catabolism in a tissue-specific way. Has high dipeptidase activity toward cysteinylglycine, an intermediate metabolite in glutathione metabolism. Metabolizes N-lactoyl-amino acids, both through hydrolysis to form lactic acid and amino acids, as well as through their formation by reverse proteolysis. Plays a role in the regulation of cell cycle arrest and apoptosis. The chain is Cytosolic non-specific dipeptidase (Cndp2) from Mus musculus (Mouse).